The following is a 77-amino-acid chain: Small VCP/p97-interacting protein (77 aa).

Disordered stretches follow at residues 1 to 20 and 25 to 77; these read MGLC…DLEE and LAEA…WTVS. A lipid anchor (N-myristoyl glycine) is attached at G2. 2 S-palmitoyl cysteine lipidation sites follow: C4 and C7. A VCP/p97-interacting motif (VIM) region spans residues 21–33; sequence KRAKLAEAAERRQ. Residues 25–37 are compositionally biased toward basic and acidic residues; that stretch reads LAEAAERRQKEAA. Residue S46 is modified to Phosphoserine.

Belongs to the SVIP family. As to quaternary structure, interacts (via VIM motif) with VCP/p97. Forms a complex with VCP/p97 and DERL1.

The protein resides in the membrane. It is found in the smooth endoplasmic reticulum membrane. The protein localises to the golgi apparatus membrane. Its subcellular location is the cell membrane. It localises to the lysosome membrane. Functionally, negative regulator of the ER-associated degradation pathway (ERAD) of misfolded proteins. It competes with AMFR/gp78 for binding VCP/p97, and inhibits AMFR/gp78-VCP/p97 complex formation that is required for degradation of ERAD substrates. Involved in the regulation of adrenal cortisol and dehydroepiandrosterone (DHEA) biosynthesis. The protein is Small VCP/p97-interacting protein (SVIP) of Homo sapiens (Human).